The sequence spans 325 residues: Glycerol-3-phosphate dehydrogenase [NAD(P)+] (325 aa).

The NADPH site is built by Trp-11, Arg-30, and Lys-103. The sn-glycerol 3-phosphate site is built by Lys-103, Gly-131, and Ser-133. Ala-135 contacts NADPH. Positions 186, 242, 252, 253, and 254 each coordinate sn-glycerol 3-phosphate. Residue Lys-186 is the Proton acceptor of the active site. Arg-253 is an NADPH binding site. Positions 279 and 281 each coordinate NADPH.

It belongs to the NAD-dependent glycerol-3-phosphate dehydrogenase family.

The protein localises to the cytoplasm. It carries out the reaction sn-glycerol 3-phosphate + NAD(+) = dihydroxyacetone phosphate + NADH + H(+). The enzyme catalyses sn-glycerol 3-phosphate + NADP(+) = dihydroxyacetone phosphate + NADPH + H(+). It participates in membrane lipid metabolism; glycerophospholipid metabolism. Functionally, catalyzes the reduction of the glycolytic intermediate dihydroxyacetone phosphate (DHAP) to sn-glycerol 3-phosphate (G3P), the key precursor for phospholipid synthesis. This Wolbachia pipientis subsp. Culex pipiens (strain wPip) protein is Glycerol-3-phosphate dehydrogenase [NAD(P)+].